Here is a 428-residue protein sequence, read N- to C-terminus: Adenylosuccinate synthetase (428 aa).

GTP-binding positions include 12 to 18 and 40 to 42; these read GDEGKGK and GHT. Residue Asp13 is the Proton acceptor of the active site. Residues Asp13 and Gly40 each coordinate Mg(2+). Residues 13–16, 38–41, Thr133, Arg147, Asn224, Thr239, and Arg303 each bind IMP; these read DEGK and NAGH. The active-site Proton donor is His41. 299-305 lines the substrate pocket; the sequence is TTTGRRR. Residues Arg305, 331–333, and 413–415 contribute to the GTP site; these read KLD and GVG.

It belongs to the adenylosuccinate synthetase family. As to quaternary structure, homodimer. Requires Mg(2+) as cofactor.

Its subcellular location is the cytoplasm. The enzyme catalyses IMP + L-aspartate + GTP = N(6)-(1,2-dicarboxyethyl)-AMP + GDP + phosphate + 2 H(+). It participates in purine metabolism; AMP biosynthesis via de novo pathway; AMP from IMP: step 1/2. Its function is as follows. Plays an important role in the de novo pathway and in the salvage pathway of purine nucleotide biosynthesis. Catalyzes the first committed step in the biosynthesis of AMP from IMP. This chain is Adenylosuccinate synthetase, found in Coprinopsis cinerea (strain Okayama-7 / 130 / ATCC MYA-4618 / FGSC 9003) (Inky cap fungus).